A 353-amino-acid polypeptide reads, in one-letter code: Ribosomal RNA small subunit methyltransferase H (353 aa).

S-adenosyl-L-methionine is bound by residues 39–41 (AGH), Asp58, Phe90, Asp108, and Gln115. The interval 334 to 353 (SEDGVRGAHGHRRRTQARRG) is disordered. The span at 341 to 353 (AHGHRRRTQARRG) shows a compositional bias: basic residues.

The protein belongs to the methyltransferase superfamily. RsmH family.

It localises to the cytoplasm. The catalysed reaction is cytidine(1402) in 16S rRNA + S-adenosyl-L-methionine = N(4)-methylcytidine(1402) in 16S rRNA + S-adenosyl-L-homocysteine + H(+). In terms of biological role, specifically methylates the N4 position of cytidine in position 1402 (C1402) of 16S rRNA. This chain is Ribosomal RNA small subunit methyltransferase H, found in Bifidobacterium animalis subsp. lactis (strain AD011).